The chain runs to 611 residues: MNPSQQHLPKLCPKRLFLFFTPFLLFSLYYILTTIKTITISSQDRHHPPQLHVPSISHYYSLPETSENRSSPPPLLLPPPPSSSSSLSSYFPLCPKNFTNYLPCHDPSTARQYSIERHYRRERHCPDIAQEKFRCLVPKPTGYKTPFPWPESRKYAWFRNVPFKRLAELKKTQNWVRLEGDRFVFPGGGTSFPGGVKDYVDVILSVLPLASGSIRTVLDIGCGVASFGAFLLNYKILTMSIAPRDIHEAQVQFALERGLPAMLGVLSTYKLPYPSRSFDMVHCSRCLVNWTSYDGLYLMEVDRVLRPEGYWVLSGPPVASRVKFKNQKRDSKELQNQMEKLNDVFRRLCWEKIAESYPVVIWRKPSNHLQCRKRLKALKFPGLCSSSDPDAAWYKEMEPCITPLPDVNDTNKTVLKNWPERLNHVPRMKTGSIQGTTIAGFKADTNLWQRRVLYYDTKFKFLSNGKYRNVIDMNAGLGGFAAALIKYPMWVMNVVPFDLKPNTLGVVYDRGLIGTYMNWCEALSTYPRTYDLIHANGVFSLYLDKCDIVDILLEMQRILRPEGAVIIRDRFDVLVKVKAITNQMRWNGTMYPEDNSVFDHGTILIVDNSIK.

Topologically, residues 1 to 15 are cytoplasmic; sequence MNPSQQHLPKLCPKR. Residues 16–36 form a helical; Signal-anchor for type II membrane protein membrane-spanning segment; it reads LFLFFTPFLLFSLYYILTTIK. Topologically, residues 37-611 are lumenal; it reads TITISSQDRH…TILIVDNSIK (575 aa). Residues Asn68, Asn97, Asn289, Asn408, Asn411, and Asn587 are each glycosylated (N-linked (GlcNAc...) asparagine).

It belongs to the methyltransferase superfamily.

The protein resides in the endoplasmic reticulum membrane. This is Probable methyltransferase PMT19 from Arabidopsis thaliana (Mouse-ear cress).